Consider the following 314-residue polypeptide: 3'-5' exoribonuclease YhaM (314 aa).

In terms of domain architecture, HD spans 163-279 (HVVSMLDLAK…LHYIDNLDAK (117 aa)).

It belongs to the YhaM family.

Its function is as follows. Shows a 3'-5' exoribonuclease activity. In Bacillus cereus (strain G9842), this protein is 3'-5' exoribonuclease YhaM.